A 53-amino-acid polypeptide reads, in one-letter code: UPF0391 membrane protein GFO_1615 (53 aa).

Helical transmembrane passes span 4 to 24 (LIVIFLIIAIIAAIFGFGGVA) and 27 to 47 (AADIAKIIFYIFLVLLVISVL).

It belongs to the UPF0391 family.

The protein localises to the cell membrane. The polypeptide is UPF0391 membrane protein GFO_1615 (Christiangramia forsetii (strain DSM 17595 / CGMCC 1.15422 / KT0803) (Gramella forsetii)).